A 382-amino-acid chain; its full sequence is Sulfate adenylyltransferase (382 aa).

It belongs to the sulfate adenylyltransferase family.

It carries out the reaction sulfate + ATP + H(+) = adenosine 5'-phosphosulfate + diphosphate. It participates in sulfur metabolism; hydrogen sulfide biosynthesis; sulfite from sulfate: step 1/3. In Staphylothermus marinus (strain ATCC 43588 / DSM 3639 / JCM 9404 / F1), this protein is Sulfate adenylyltransferase.